The following is a 188-amino-acid chain: Ubiquitin-like protein 4B (188 aa).

In terms of domain architecture, Ubiquitin-like spans 1–76; the sequence is MFLTVKLLLG…INVIMRPPED (76 aa). Positions 146–188 are disordered; it reads EEKEAPAVASELEQNNGGGGGGGGTGGEGGGKKEEEEGEEADQ. Gly residues predominate over residues 161-174; it reads NGGGGGGGGTGGEG.

In terms of tissue distribution, expressed specifically in post-meiotic male germ cells of the testis. Abundantly expressed in stage 14-16 spermatids.

It is found in the cytoplasm. The polypeptide is Ubiquitin-like protein 4B (Ubl4b) (Mus musculus (Mouse)).